The following is a 147-amino-acid chain: uncharacterized protein (147 aa).

The 104-residue stretch at 44 to 147 folds into the HTH LytTR-type domain; the sequence is LVGYIDKEIH…LKSIKERLSI (104 aa).

It is found in the cytoplasm. This is an uncharacterized protein from Staphylococcus aureus (strain Mu50 / ATCC 700699).